We begin with the raw amino-acid sequence, 192 residues long: U1 small nuclear ribonucleoprotein C (192 aa).

The segment at 4 to 36 (YYCEYCDIYLTHSSPVGRRQHNQGRKHISAKIE) adopts a Matrin-type zinc-finger fold. Residues 118 to 192 (PGANKYPNNN…FVNKNSEQPN (75 aa)) form a disordered region. Residues 133–154 (RISNTPKPYNNYTNKPITNSPY) are compositionally biased toward polar residues. Residues 164-173 (NNENSNNFSN) are compositionally biased toward low complexity. Over residues 174-192 (YQMNKDNSNFVNKNSEQPN) the composition is skewed to polar residues.

It belongs to the U1 small nuclear ribonucleoprotein C family. As to quaternary structure, U1 snRNP is composed of the 7 core Sm proteins B/B', D1, D2, D3, E, F and G that assemble in a heptameric protein ring on the Sm site of the small nuclear RNA to form the core snRNP, and at least 3 U1 snRNP-specific proteins U1-70K, U1-A and U1-C. U1-C interacts with U1 snRNA and the 5' splice-site region of the pre-mRNA.

The protein localises to the nucleus. In terms of biological role, component of the spliceosomal U1 snRNP, which is essential for recognition of the pre-mRNA 5' splice-site and the subsequent assembly of the spliceosome. U1-C is directly involved in initial 5' splice-site recognition for both constitutive and regulated alternative splicing. The interaction with the 5' splice-site seems to precede base-pairing between the pre-mRNA and the U1 snRNA. Stimulates commitment or early (E) complex formation by stabilizing the base pairing of the 5' end of the U1 snRNA and the 5' splice-site region. The chain is U1 small nuclear ribonucleoprotein C from Plasmodium chabaudi chabaudi.